A 481-amino-acid chain; its full sequence is GDP-fucose protein O-fucosyltransferase 3 (481 aa).

Over 1–8 (MVRFQRRK) the chain is Cytoplasmic. A helical; Signal-anchor for type II membrane protein membrane pass occupies residues 9–31 (LLASCLCVTATVFLMVTLQVVVE). Over 32 to 481 (LGKFERKKLK…EEFWALVFKD (450 aa)) the chain is Lumenal. Residues asparagine 110, asparagine 168, and asparagine 318 are each glycosylated (N-linked (GlcNAc...) asparagine). A disulfide bridge links cysteine 389 with cysteine 392. Asparagine 468 is a glycosylation site (N-linked (GlcNAc...) asparagine).

It belongs to the glycosyltransferase 10 family. As to expression, widely expressed, with a higher expression in liver and thymus.

The protein localises to the endoplasmic reticulum membrane. It catalyses the reaction L-threonyl-[protein] + GDP-beta-L-fucose = 3-O-(alpha-L-fucosyl)-L-threonyl-[protein] + GDP + H(+). The enzyme catalyses L-seryl-[protein] + GDP-beta-L-fucose = 3-O-(alpha-L-fucosyl)-L-seryl-[protein] + GDP + H(+). It functions in the pathway protein modification; protein glycosylation. Protein O-fucosyltransferase that specifically catalyzes O-fucosylation of serine or threonine residues in EMI domains of target proteins, such as MMRN1, MMRN2 and EMID1. Attaches fucose through an O-glycosidic linkage. O-fucosylation of EMI domain-containing proteins may be required for facilitating protein folding and secretion. May also show alpha-(1,3)-fucosyltransferase activity toward the innermost N-acetyl glucosamine (GlcNAc) residue in biantennary N-glycan acceptors. However, this was tested with a library of synthetic substrates and this activity is unsure in vivo. May be involved in biosynthesis of Lewis X-carrying biantennary N-glycans that regulate neuron stem cell self-renewal during brain development. The sequence is that of GDP-fucose protein O-fucosyltransferase 3 from Mus musculus (Mouse).